Reading from the N-terminus, the 119-residue chain is Holo-[acyl-carrier-protein] synthase (119 aa).

Positions 8 and 58 each coordinate Mg(2+).

Belongs to the P-Pant transferase superfamily. AcpS family. Requires Mg(2+) as cofactor.

The protein localises to the cytoplasm. The catalysed reaction is apo-[ACP] + CoA = holo-[ACP] + adenosine 3',5'-bisphosphate + H(+). In terms of biological role, transfers the 4'-phosphopantetheine moiety from coenzyme A to a Ser of acyl-carrier-protein. The protein is Holo-[acyl-carrier-protein] synthase of Halalkalibacterium halodurans (strain ATCC BAA-125 / DSM 18197 / FERM 7344 / JCM 9153 / C-125) (Bacillus halodurans).